Reading from the N-terminus, the 511-residue chain is Bifunctional purine biosynthesis protein PurH (511 aa).

An MGS-like domain is found at 1-145 (MKKRALVSVS…KNHKFVSVIV (145 aa)).

It belongs to the PurH family.

The enzyme catalyses (6R)-10-formyltetrahydrofolate + 5-amino-1-(5-phospho-beta-D-ribosyl)imidazole-4-carboxamide = 5-formamido-1-(5-phospho-D-ribosyl)imidazole-4-carboxamide + (6S)-5,6,7,8-tetrahydrofolate. It carries out the reaction IMP + H2O = 5-formamido-1-(5-phospho-D-ribosyl)imidazole-4-carboxamide. It functions in the pathway purine metabolism; IMP biosynthesis via de novo pathway; 5-formamido-1-(5-phospho-D-ribosyl)imidazole-4-carboxamide from 5-amino-1-(5-phospho-D-ribosyl)imidazole-4-carboxamide (10-formyl THF route): step 1/1. Its pathway is purine metabolism; IMP biosynthesis via de novo pathway; IMP from 5-formamido-1-(5-phospho-D-ribosyl)imidazole-4-carboxamide: step 1/1. The chain is Bifunctional purine biosynthesis protein PurH from Bacillus mycoides (strain KBAB4) (Bacillus weihenstephanensis).